A 566-amino-acid chain; its full sequence is Proline--tRNA ligase 1 (566 aa).

It belongs to the class-II aminoacyl-tRNA synthetase family. ProS type 1 subfamily. As to quaternary structure, homodimer.

Its subcellular location is the cytoplasm. The catalysed reaction is tRNA(Pro) + L-proline + ATP = L-prolyl-tRNA(Pro) + AMP + diphosphate. In terms of biological role, catalyzes the attachment of proline to tRNA(Pro) in a two-step reaction: proline is first activated by ATP to form Pro-AMP and then transferred to the acceptor end of tRNA(Pro). As ProRS can inadvertently accommodate and process non-cognate amino acids such as alanine and cysteine, to avoid such errors it has two additional distinct editing activities against alanine. One activity is designated as 'pretransfer' editing and involves the tRNA(Pro)-independent hydrolysis of activated Ala-AMP. The other activity is designated 'posttransfer' editing and involves deacylation of mischarged Ala-tRNA(Pro). The misacylated Cys-tRNA(Pro) is not edited by ProRS. This is Proline--tRNA ligase 1 from Bacillus thuringiensis subsp. konkukian (strain 97-27).